We begin with the raw amino-acid sequence, 70 residues long: DNA-directed RNA polymerase subunit epsilon (70 aa).

This sequence belongs to the RNA polymerase subunit epsilon family. In terms of assembly, RNAP is composed of a core of 2 alpha, a beta and a beta' subunit. The core is associated with a delta subunit, and at least one of epsilon or omega. When a sigma factor is associated with the core the holoenzyme is formed, which can initiate transcription.

It catalyses the reaction RNA(n) + a ribonucleoside 5'-triphosphate = RNA(n+1) + diphosphate. A non-essential component of RNA polymerase (RNAP). This Limosilactobacillus reuteri (strain DSM 20016) (Lactobacillus reuteri) protein is DNA-directed RNA polymerase subunit epsilon.